Consider the following 341-residue polypeptide: UDP-3-O-acylglucosamine N-acyltransferase (341 aa).

The Proton acceptor role is filled by His-241.

This sequence belongs to the transferase hexapeptide repeat family. LpxD subfamily. In terms of assembly, homotrimer.

It carries out the reaction a UDP-3-O-[(3R)-3-hydroxyacyl]-alpha-D-glucosamine + a (3R)-hydroxyacyl-[ACP] = a UDP-2-N,3-O-bis[(3R)-3-hydroxyacyl]-alpha-D-glucosamine + holo-[ACP] + H(+). It participates in bacterial outer membrane biogenesis; LPS lipid A biosynthesis. Catalyzes the N-acylation of UDP-3-O-acylglucosamine using 3-hydroxyacyl-ACP as the acyl donor. Is involved in the biosynthesis of lipid A, a phosphorylated glycolipid that anchors the lipopolysaccharide to the outer membrane of the cell. The sequence is that of UDP-3-O-acylglucosamine N-acyltransferase from Mannheimia succiniciproducens (strain KCTC 0769BP / MBEL55E).